Here is a 413-residue protein sequence, read N- to C-terminus: Gamma-DL-glutamyl hydrolase (413 aa).

Positions 1 to 32 (MNTLANWKKFLLVAVIICFLVPIMTKAEIAEA) are cleaved as a signal peptide. 3 NlpC/P60 domains span residues 33-159 (DTSS…RRIA), 163-287 (ATAD…RRFD), and 291-413 (IPKE…IRVQ). The active-site Nucleophile is the Cys-194. The Proton acceptor role is filled by His-247. Residue Gln-259 is part of the active site.

This sequence belongs to the peptidase C40 family.

Its subcellular location is the secreted. It localises to the cell wall. Its activity is regulated as follows. Inhibited by pretreatment with 1 mM 4-(hydroxymercuri)benzoate, a sulfhydryl inhibitor. In terms of biological role, cleaves, in an endo-type manner, the gamma-glutamyl bond between D-glutamate and L-glutamate of poly-gamma-glutamate (PGA). The protein is Gamma-DL-glutamyl hydrolase (pgdS) of Bacillus subtilis (strain 168).